The primary structure comprises 645 residues: Beta-galactosidase (645 aa).

R102 serves as a coordination point for substrate. C106 serves as a coordination point for Zn(2+). Residue N140 participates in substrate binding. The Proton donor role is filled by E141. Residues C150, C152, and C155 each contribute to the Zn(2+) site. Residue E312 is the Nucleophile of the active site. Substrate is bound by residues W320 and 360 to 363; that span reads EQMH.

It belongs to the glycosyl hydrolase 42 family. Homotrimer.

It catalyses the reaction Hydrolysis of terminal non-reducing beta-D-galactose residues in beta-D-galactosides.. Its activity is regulated as follows. Inhibited by Cu(2+) and Fe(2+), and moderately activated by divalent cations such as Co(2+), Mn(2+) and Zn(2+). Considerably activated by dithiothreitol, beta-mercaptoethanol and cysteine. The sequence is that of Beta-galactosidase from Thermus thermophilus.